Consider the following 612-residue polypeptide: Dihydroxy-acid dehydratase (612 aa).

Aspartate 81 lines the Mg(2+) pocket. Residue cysteine 122 participates in [2Fe-2S] cluster binding. The Mg(2+) site is built by aspartate 123 and lysine 124. Lysine 124 carries the post-translational modification N6-carboxylysine. Cysteine 195 is a binding site for [2Fe-2S] cluster. Glutamate 491 serves as a coordination point for Mg(2+). The active-site Proton acceptor is serine 517.

The protein belongs to the IlvD/Edd family. Homodimer. [2Fe-2S] cluster is required as a cofactor. The cofactor is Mg(2+).

It catalyses the reaction (2R)-2,3-dihydroxy-3-methylbutanoate = 3-methyl-2-oxobutanoate + H2O. It carries out the reaction (2R,3R)-2,3-dihydroxy-3-methylpentanoate = (S)-3-methyl-2-oxopentanoate + H2O. The protein operates within amino-acid biosynthesis; L-isoleucine biosynthesis; L-isoleucine from 2-oxobutanoate: step 3/4. It participates in amino-acid biosynthesis; L-valine biosynthesis; L-valine from pyruvate: step 3/4. Its function is as follows. Functions in the biosynthesis of branched-chain amino acids. Catalyzes the dehydration of (2R,3R)-2,3-dihydroxy-3-methylpentanoate (2,3-dihydroxy-3-methylvalerate) into 2-oxo-3-methylpentanoate (2-oxo-3-methylvalerate) and of (2R)-2,3-dihydroxy-3-methylbutanoate (2,3-dihydroxyisovalerate) into 2-oxo-3-methylbutanoate (2-oxoisovalerate), the penultimate precursor to L-isoleucine and L-valine, respectively. The chain is Dihydroxy-acid dehydratase from Bartonella henselae (strain ATCC 49882 / DSM 28221 / CCUG 30454 / Houston 1) (Rochalimaea henselae).